A 223-amino-acid chain; its full sequence is MSQNSESIRMVLIGPPGAGKGTQAPNLVKQFGAAHLSTGDMLRSQVAKGTPLGVEAKKIMDQGGLVSDEIMVGMIKQELETNPACGKGFILDGFPRTIPQAEKLDQMLAERGTPLEKAVELKVDDELLVARITGRLVHPSSGRSYHKLFNPPKVEMTDDVTGEPLVQRSDDNAEALMKRLNSYHQQTEPIVEFYKKTGIWAGVDASQAPDNVWTSILKVLGKN.

17–22 is an ATP binding site; the sequence is GAGKGT. An NMP region spans residues 37–66; it reads STGDMLRSQVAKGTPLGVEAKKIMDQGGLV. AMP contacts are provided by residues Thr38, Arg43, 64–66, 93–96, and Gln100; these read GLV and GFPR. The tract at residues 134 to 171 is LID; the sequence is GRLVHPSSGRSYHKLFNPPKVEMTDDVTGEPLVQRSDD. ATP is bound by residues Arg135 and 144–145; that span reads SY. AMP-binding residues include Arg168 and Arg179. Position 207 (Gln207) interacts with ATP.

The protein belongs to the adenylate kinase family. AK2 subfamily. In terms of assembly, monomer.

It localises to the cytoplasm. Its subcellular location is the cytosol. It is found in the mitochondrion intermembrane space. The catalysed reaction is AMP + ATP = 2 ADP. In terms of biological role, catalyzes the reversible transfer of the terminal phosphate group between ATP and AMP. Plays an important role in cellular energy homeostasis and in adenine nucleotide metabolism. Adenylate kinase activity is critical for regulation of the phosphate utilization and the AMP de novo biosynthesis pathways. In Vanderwaltozyma polyspora (strain ATCC 22028 / DSM 70294 / BCRC 21397 / CBS 2163 / NBRC 10782 / NRRL Y-8283 / UCD 57-17) (Kluyveromyces polysporus), this protein is Adenylate kinase.